Here is a 1095-residue protein sequence, read N- to C-terminus: Inactive phospholipase C-like protein 1 (1095 aa).

Positions 1-11 (MAEGAAGREDP) are enriched in basic and acidic residues. Residues 1 to 61 (MAEGAAGRED…PGAAGTPADS (61 aa)) are disordered. S47 and S77 each carry phosphoserine. Residues 83–222 (SNQKCGGRKK…IWVSGLRYLV (140 aa)) form an interaction with PPP1C region. T93 carries the phosphothreonine; by PKA modification. Phosphoserine is present on S95. Residues 113 to 223 (SFMQAGCELK…WVSGLRYLVS (111 aa)) form the PH domain. The region spanning 398-542 (QDMTQPLSHY…LKRMIIVKGK (145 aa)) is the PI-PLC X-box domain. The interval 543 to 567 (KLPSDPDVLEGEVTDEDEEAEMSRR) is interaction with GABA A beta subunit. T556 is subject to Phosphothreonine. S569 is subject to Phosphoserine. The PI-PLC Y-box domain maps to 585-701 (LSDLVSICKS…GYVLRPSIMR (117 aa)). Residues 701–830 (RDEVSYFSAN…PGYRHVPLRS (130 aa)) form the C2 domain. Coiled coils occupy residues 894–914 (LREA…IKEL) and 1034–1059 (LKGQ…QLAC). Positions 1066–1095 (KAPSSSAEAKSKRSLEAIEEKESSEENGKL) are disordered. A compositionally biased stretch (basic and acidic residues) spans 1074–1095 (AKSKRSLEAIEEKESSEENGKL). S1079 carries the phosphoserine modification.

In terms of assembly, interacts with PPP2CA. Interacts with Ins(1,4,5)P3, Ins(1,4,5,6)P4, GABARAP, GABA receptor beta subunits, GABA receptor gamma-2 subunits and PPP1C. May form a ternary complex with GABA receptor beta subunit and GABARAP. The formation of a ternary complex with GABA receptor beta subunit and GABARAP could be the key step for facilitating the association of GABARAP with the GABA receptor gamma-2 subunit and to allow it to be transported at the right destination. Phosphorylated by the catalytic subunit of PKA. Phosphorylation of Thr-93 resulted in dissociation of PPP1C from PRIP1. In terms of tissue distribution, expressed in a variety of fetal and adult organs including brain, lung and kidney. Its expression was greatly reduced in small and non-small cell lung carcinoma. Isoform 1 is predominantly expressed in brain.

Its subcellular location is the cytoplasm. Functionally, involved in an inositol phospholipid-based intracellular signaling cascade. Shows no PLC activity to phosphatidylinositol 4,5-bisphosphate and phosphatidylinositol. Component in the phospho-dependent endocytosis process of GABA A receptor. Regulates the turnover of receptors and thus contributes to the maintenance of GABA-mediated synaptic inhibition. Its aberrant expression could contribute to the genesis and progression of lung carcinoma. Acts as an inhibitor of PPP1C. The polypeptide is Inactive phospholipase C-like protein 1 (PLCL1) (Homo sapiens (Human)).